Consider the following 124-residue polypeptide: uncharacterized protein (124 aa).

The N-terminal stretch at 1-21 (MFLLSLLHFFHPSLIPSLSLS) is a signal peptide.

This is an uncharacterized protein from Schizosaccharomyces pombe (strain 972 / ATCC 24843) (Fission yeast).